A 297-amino-acid polypeptide reads, in one-letter code: 6-dehydroglucose reductase (297 aa).

NADP(+)-binding residues include Trp-20, Arg-21, and Asp-49. The Proton donor role is filled by Tyr-54. D-glucose contacts are provided by Tyr-54, Lys-98, His-129, and Arg-130. 10 residues coordinate NADP(+): Ser-159, Asn-160, Gln-181, Ser-211, Leu-213, Gly-215, Gly-261, Thr-262, Asn-263, and Arg-267.

Belongs to the aldo/keto reductase family. As to quaternary structure, homotrimer.

It carries out the reaction D-glucose + NADP(+) = 6-dehydro-D-glucose + NADPH + H(+). Its function is as follows. Part of the sulfoquinovose monooxygenase (sulfo-SMO) pathway, a D-sulfoquinovose degradation pathway that enables the complete utilization of all carbons within sulfoquinovose (SQ) with concomitant production of inorganic sulfite. Catalyzes the NADP-dependent reduction of 6-dehydro-D-glucose to D-glucose. Cannot use NADH. The chain is 6-dehydroglucose reductase from Agrobacterium fabrum (strain C58 / ATCC 33970) (Agrobacterium tumefaciens (strain C58)).